Consider the following 178-residue polypeptide: 6,7-dimethyl-8-ribityllumazine synthase (178 aa).

Residues phenylalanine 23, 61 to 63 (SFE), and 85 to 87 (AVI) contribute to the 5-amino-6-(D-ribitylamino)uracil site. Residue 90–91 (QT) coordinates (2S)-2-hydroxy-3-oxobutyl phosphate. Histidine 93 acts as the Proton donor in catalysis. A 5-amino-6-(D-ribitylamino)uracil-binding site is contributed by tyrosine 118. Arginine 132 provides a ligand contact to (2S)-2-hydroxy-3-oxobutyl phosphate.

It belongs to the DMRL synthase family.

It catalyses the reaction (2S)-2-hydroxy-3-oxobutyl phosphate + 5-amino-6-(D-ribitylamino)uracil = 6,7-dimethyl-8-(1-D-ribityl)lumazine + phosphate + 2 H2O + H(+). Its pathway is cofactor biosynthesis; riboflavin biosynthesis; riboflavin from 2-hydroxy-3-oxobutyl phosphate and 5-amino-6-(D-ribitylamino)uracil: step 1/2. In terms of biological role, catalyzes the formation of 6,7-dimethyl-8-ribityllumazine by condensation of 5-amino-6-(D-ribitylamino)uracil with 3,4-dihydroxy-2-butanone 4-phosphate. This is the penultimate step in the biosynthesis of riboflavin. This Thermosynechococcus vestitus (strain NIES-2133 / IAM M-273 / BP-1) protein is 6,7-dimethyl-8-ribityllumazine synthase.